Here is a 322-residue protein sequence, read N- to C-terminus: uncharacterized protein (322 aa).

The helical transmembrane segment at 212-234 threads the bilayer; the sequence is VCALLVGAISVATAGAAFSIIIV.

It is found in the membrane. This is an uncharacterized protein from Rickettsia prowazekii (strain Madrid E).